A 379-amino-acid polypeptide reads, in one-letter code: Forkhead box protein F1 (379 aa).

The segment at 1–45 (MSSAPEKQQPPHGGGGGGGGGGGAAMDPASSGPSKAKKTNAGIRR) is disordered. Positions 12 to 24 (HGGGGGGGGGGGA) are enriched in gly residues. Positions 47–138 (EKPPYSYIAL…EFMFEEGSFR (92 aa)) form a DNA-binding region, fork-head.

As to expression, expressed in lung and placenta.

The protein resides in the nucleus. In terms of biological role, probable transcription activator for a number of lung-specific genes. This chain is Forkhead box protein F1 (FOXF1), found in Homo sapiens (Human).